Reading from the N-terminus, the 280-residue chain is Transcription factor HES-1 (280 aa).

Residues 1–44 (MPADIMEKNSSSPVAATPASVNTTPDKPKTASEHRKSSKPIMEK) are disordered. Low complexity predominate over residues 10–21 (SSSPVAATPASV). Residues 26–35 (DKPKTASEHR) show a composition bias toward basic and acidic residues. The bHLH domain occupies 34–91 (HRKSSKPIMEKRRRARINESLSQLKTLILDALKKDSSRHSKLEKADILEMTVKHLRNL). Residues 110 to 143 (YRAGFSECMNEVTRFLSTCEGVNTEVRTRLLGHL) form the Orange domain. 2 disordered regions span residues 157–200 (GQPH…PPGG) and 254–280 (TSVG…PWRN). Pro residues-rich tracts occupy residues 164–174 (QAPPPPPPGPG) and 181–200 (FAPP…PPGG). A compositionally biased stretch (polar residues) spans 254–271 (TSVGPNAVSPSSGPSLTA). The WRPW motif signature appears at 275 to 278 (WRPW).

As to quaternary structure, transcription repression requires formation of a complex with a corepressor protein of the Groucho/TLE family. Interacts with SIRT1. Interacts (via WPRW motif) with TLE1, and more weakly with TLE2. Interacts with HES6. Interacts with an FA complex, composed of FANCA, FANCF, FANCG and FANCL, but not of FANCC, nor FANCE.

It localises to the nucleus. Transcriptional repressor of genes that require a bHLH protein for their transcription. May act as a negative regulator of myogenesis by inhibiting the functions of MYOD1 and ASH1. Binds DNA on N-box motifs: 5'-CACNAG-3' with high affinity and on E-box motifs: 5'-CANNTG-3' with low affinity. May play a role in a functional FA core complex response to DNA cross-link damage, being required for the stability and nuclear localization of FA core complex proteins, as well as for FANCD2 monoubiquitination in response to DNA damage. In Bos taurus (Bovine), this protein is Transcription factor HES-1 (HES1).